The following is a 193-amino-acid chain: uncharacterized protein (193 aa).

The next 4 membrane-spanning stretches (helical) occupy residues 40–56 (LYIA…LKLI), 63–79 (AAGL…SSLC), 86–110 (CSGY…IVSC), and 117–138 (FIFP…FQIY). Residues 158-193 (TTTKLSRSSSAPDLSCPSLSTQPTSPNQSLSAYKKY) form a disordered region.

Belongs to the chlamydial CPn_0442/CT_006/TC_0274 family.

The protein resides in the cell membrane. This is an uncharacterized protein from Chlamydia muridarum (strain MoPn / Nigg).